A 262-amino-acid polypeptide reads, in one-letter code: Abhydrolase domain-containing protein ACTT2 (262 aa).

Residues 260–262 (SKL) carry the Peroxisomal targeting signal type 1 motif.

The protein belongs to the AB hydrolase superfamily. AKT2 hydrolase family.

Its subcellular location is the peroxisome. The protein operates within mycotoxin biosynthesis. Abhydrolase domain-containing protein; part of the gene clusters that mediate the biosynthesis of the host-selective toxins (HSTs) ACT-toxins responsible for brown spot of tangerine disease by the tangerine pathotype which affects tangerines and mandarins. ACT-toxins consist of three moieties, 9,10-epoxy-8-hydroxy-9-methyl-decatrienoic acid (EDA), valine and a polyketide. ACT-toxin I is toxic to both citrus and pear; toxin II the 5''-deoxy derivative of ACT-toxin I, is highly toxic to pear and slightly toxic to citrus. On cellular level, ACT-toxins affect plasma membrane of susceptible cells and cause a sudden increase in loss of K(+) after a few minutes of toxin treatment. The acyl-CoA ligase ACTT1, the hydrolase ACTT2, the enoyl-CoA hydratases ACTT3 and ACTT6, and the acyl-CoA synthetase ACTT5 are all involved in the biosynthesis of the AK-, AF- and ACT-toxin common 9,10-epoxy-8-hydroxy-9-methyl-decatrienoic acid (EDA) structural moiety. The exact role of each enzyme, and of additional enzymes identified within the AF-toxin clusters have still to be determined. On the other hand, ACTTS1 to ACTTS4 are specific to the tangerine pathotype. The function of ACTTS3 is to elongate the polyketide chain portion of ACT-toxin that is unique to this toxin. The enoyl-reductase ACTTS2 might complement the missing enoyl-reductase (ER) domain in ACTTS3 in the synthesis of the polyketide portion of ACT-toxin. The roles of the nonribosomal peptide synthetases-related proteins ACTTS1 and ACTTS4 have also still not been elucidated. The chain is Abhydrolase domain-containing protein ACTT2 from Alternaria alternata (Alternaria rot fungus).